Here is a 743-residue protein sequence, read N- to C-terminus: Sulfhydryl oxidase 1 (743 aa).

The signal sequence occupies residues 1 to 42; it reads MWRRRARSGGGGGGGGGGAAPRCRWWPAVLALLAAALPAARS. In terms of domain architecture, Thioredoxin spans 43–166; sequence RSLYSPSDPL…LRRAIITNLE (124 aa). Catalysis depends on nucleophile residues Cys-80 and Cys-83. 2 disulfides stabilise this stretch: Cys-80-Cys-83 and Cys-111-Cys-120. N-linked (GlcNAc...) asparagine glycosylation is found at Asn-254, Asn-288, Asn-295, Asn-371, and Asn-401. A disulfide bridge connects residues Cys-407 and Cys-419. The ERV/ALR sulfhydryl oxidase domain maps to 410-513; that stretch reads SEPHFRGYPC…EDPQFPKLQW (104 aa). FAD contacts are provided by residues Arg-415, Trp-422, His-426, Glu-461, His-465, 488-495, Lys-510, and Trp-513; that span reads WSHHNEVN. A disulfide bridge links Cys-459 with Cys-462. The cysteines at positions 519 and 522 are disulfide-linked. Residues 567-617 form a disordered region; that stretch reads ASARLSTAGLREKEEEERKEEEEEGEKETEKPHREGETGRPGSSELRRPSI. The segment covering 580–593 has biased composition (acidic residues); sequence EEEERKEEEEEGEK. Basic and acidic residues predominate over residues 594 to 604; the sequence is ETEKPHREGET. A helical membrane pass occupies residues 707-727; sequence SLCIALYFLSSMCLLGMYTFF.

It belongs to the quiescin-sulfhydryl oxidase (QSOX) family. The cofactor is FAD. N-glycosylated. O-glycosylated on Thr and Ser residues.

The protein resides in the golgi apparatus membrane. It is found in the secreted. The enzyme catalyses 2 R'C(R)SH + O2 = R'C(R)S-S(R)CR' + H2O2. Its function is as follows. Catalyzes the oxidation of sulfhydryl groups in peptide and protein thiols to disulfides with the reduction of oxygen to hydrogen peroxide. Plays a role in disulfide bond formation in a variety of extracellular proteins. In fibroblasts, required for normal incorporation of laminin into the extracellular matrix, and thereby for normal cell-cell adhesion and cell migration. This Gallus gallus (Chicken) protein is Sulfhydryl oxidase 1 (QSOX1).